The following is a 2146-amino-acid chain: Phospholipid-transporting ATPase ABCA7 (2146 aa).

A helical transmembrane segment spans residues 22-42 (PVQLLVELLWPLFLFFILVAV). Residues 43 to 549 (RHSHPPLEHH…DVFLRVLSRS (507 aa)) are Extracellular-facing. Residues C75 and C225 are joined by a disulfide bond. A glycan (N-linked (GlcNAc...) asparagine) is linked at N312. 6 consecutive transmembrane segments (helical) span residues 550-570 (LPLF…KAVV), 593-613 (LGWF…LVLV), 626-646 (GVVF…SFLL), 655-675 (LAAA…VLCV), 687-707 (VAAS…LALL), and 727-747 (VFSL…YGLA). One can recognise an ABC transporter 1 domain in the interval 807-1038 (VSVRSLEKRF…LGSGYYLTLV (232 aa)). 841 to 848 (GHNGAGKT) lines the ATP pocket. Residues 849-869 (TTLSILSGLFPPSGGSAFILG) traverse the membrane as a helical segment. A compositionally biased stretch (basic and acidic residues) spans 1048-1066 (EKADTDMEGSVDTRQEKKN). 2 disordered regions span residues 1048–1072 (EKAD…QGSR) and 1185–1209 (TALE…DAVG). A helical membrane pass occupies residues 1243–1263 (IVLPALFVGLALVFSLIVPPF). Over 1264–1537 (GHYPALRLSP…ALMASSVDVL (274 aa)) the chain is Extracellular. C1345 and C1359 are disulfide-bonded. 6 helical membrane-spanning segments follow: residues 1538 to 1558 (VSIC…LVLI), 1584 to 1604 (FLWD…IFLA), 1621 to 1641 (LLLL…SFFF), 1649 to 1669 (VVLT…TFVL), 1683 to 1703 (ILKQ…LIDM), and 1729 to 1749 (VVGK…LFTL). The region spanning 1793 to 2025 (LVLRNLTKVY…FAAGHTLTLR (233 aa)) is the ABC transporter 2 domain. 1827 to 1834 (GVNGAGKT) contacts ATP. The disordered stretch occupies residues 2104-2146 (QGKDEDTEEQKEAGVGVDPAPGLQHPKRVSQFLDDPSTAETVL).

This sequence belongs to the ABC transporter superfamily. ABCA family. In terms of processing, N-glycosylated. In terms of tissue distribution, expressed in leukocytes (at protein level). Widely expressed. Highly expressed in myelo-lymphatic tissues including peripheral leukocytes, thymus, spleen and bone marrow. Expressed in the hippocampus and the cerebellum. Isoform 2: Abundant in lymph node, spleen, thymus and trachea. Isoform 1: Strongly expressed in brain and bone marrow.

Its subcellular location is the cell membrane. The protein resides in the golgi apparatus membrane. It is found in the early endosome membrane. It localises to the cytoplasm. The protein localises to the cell projection. Its subcellular location is the ruffle membrane. The protein resides in the phagocytic cup. It is found in the endoplasmic reticulum. The enzyme catalyses ATP + H2O + phospholipidSide 1 = ADP + phosphate + phospholipidSide 2.. The catalysed reaction is a 1,2-diacyl-sn-glycero-3-phosphocholine(out) + ATP + H2O = a 1,2-diacyl-sn-glycero-3-phosphocholine(in) + ADP + phosphate + H(+). It catalyses the reaction a 1,2-diacyl-sn-glycero-3-phospho-L-serine(out) + ATP + H2O = a 1,2-diacyl-sn-glycero-3-phospho-L-serine(in) + ADP + phosphate + H(+). Its activity is regulated as follows. ATPase activity is decreased by cholesterol and ceramide. ATPase activity is stimulated by phosphatidylserine, phosphatidylcholine and sphingomyelin, but phosphatidylserine is more effective. Its function is as follows. Catalyzes the translocation of specific phospholipids from the cytoplasmic to the extracellular/lumenal leaflet of membrane coupled to the hydrolysis of ATP. Transports preferentially phosphatidylserine over phosphatidylcholine. Plays a role in lipid homeostasis and macrophage-mediated phagocytosis. Binds APOA1 and may function in apolipoprotein-mediated phospholipid efflux from cells. May also mediate cholesterol efflux. May regulate cellular ceramide homeostasis during keratinocyte differentiation. Involved in lipid raft organization and CD1D localization on thymocytes and antigen-presenting cells, which plays an important role in natural killer T-cell development and activation. Plays a role in phagocytosis of apoptotic cells by macrophages. Macrophage phagocytosis is stimulated by APOA1 or APOA2, probably by stabilization of ABCA7. Also involved in phagocytic clearance of amyloid-beta by microglia cells and macrophages. Further limits amyloid-beta production by playing a role in the regulation of amyloid-beta A4 precursor protein (APP) endocytosis and/or processing. Amyloid-beta is the main component of amyloid plaques found in the brains of Alzheimer patients. This chain is Phospholipid-transporting ATPase ABCA7, found in Homo sapiens (Human).